The chain runs to 596 residues: Chloride intracellular channel protein 6 (596 aa).

A disordered region spans residues 1 to 360 (MAEATEPKEV…ALEEGDPGQE (360 aa)). Residues 34-48 (LEGREASEEAAEAPR) are compositionally biased toward basic and acidic residues. Serine 40 is subject to Phosphoserine. The segment covering 65–74 (GCGQDEGTGG) has biased composition (gly residues). Residues 83-98 (GPEAETPGASGAPGEA) show a composition bias toward low complexity. The segment covering 118-130 (SAQQVQGMSSGLD) has biased composition (polar residues). Over residues 148–160 (DPTASEAGEEAES) the composition is skewed to acidic residues. Composition is skewed to low complexity over residues 197–213 (GSES…PQPQ) and 225–244 (GGNE…AGEG). Over residues 246–290 (TLGKDGSEEAASEDARVDAHENGDQGKLQEETGEEEARPEPELKG) the composition is skewed to basic and acidic residues. Serine 304 carries the post-translational modification Phosphoserine. Positions 338–348 (ELGRVNGRREN) are enriched in basic and acidic residues. The short motif at 379 to 382 (CPFS) is the G-site element. Residues 381–401 (FSQRLFMILWLKGVIFNVTTV) form a helical membrane-spanning segment. Residues 425 to 596 (DGEVKTDVNK…AYSDAAKRMK (172 aa)) form the GST C-terminal domain.

This sequence belongs to the chloride channel CLIC family. As to quaternary structure, monomer (soluble state). Interacts with dopamine receptors DRD2, DRD3 and DRD4. Phosphorylated.

It localises to the cytoplasm. The protein localises to the cell membrane. It catalyses the reaction chloride(in) = chloride(out). Its activity is regulated as follows. Channel activity is redox- and pH-regulated. Inhibited by IAA-94. Its function is as follows. In the soluble state, catalyzes glutaredoxin-like thiol disulfide exchange reactions with reduced glutathione as electron donor. Can insert into membranes and form voltage-dependent chloride-selective channels. The channel opens upon membrane depolarization at positive voltages and closes at negative membrane voltages. May play a critical role in water-secreting cells, possibly through the regulation of chloride ion transport. The protein is Chloride intracellular channel protein 6 (Clic6) of Mus musculus (Mouse).